Consider the following 215-residue polypeptide: Cytochrome b6 (215 aa).

The helical transmembrane segment at 32-52 (IFYCLGGITLVCFLIQFATGF) threads the bilayer. Residue Cys35 coordinates heme c. Heme b contacts are provided by His86 and His100. The next 3 membrane-spanning stretches (helical) occupy residues 90–110 (ASMM…TGGF), 116–136 (LTWV…VTGY), and 186–206 (AHTF…FLMI). The heme b site is built by His187 and His202.

It belongs to the cytochrome b family. PetB subfamily. As to quaternary structure, the 4 large subunits of the cytochrome b6-f complex are cytochrome b6, subunit IV (17 kDa polypeptide, PetD), cytochrome f and the Rieske protein, while the 4 small subunits are PetG, PetL, PetM and PetN. The complex functions as a dimer. Heme b is required as a cofactor. It depends on heme c as a cofactor.

The protein localises to the cellular thylakoid membrane. In terms of biological role, component of the cytochrome b6-f complex, which mediates electron transfer between photosystem II (PSII) and photosystem I (PSI), cyclic electron flow around PSI, and state transitions. This chain is Cytochrome b6, found in Trichormus variabilis (strain ATCC 29413 / PCC 7937) (Anabaena variabilis).